A 345-amino-acid polypeptide reads, in one-letter code: Dihydroorotate dehydrogenase (quinone) (345 aa).

Residues 65-69 and Thr89 each bind FMN; that span reads AGLDK. Position 69 (Lys69) interacts with substrate. Substrate is bound at residue 114 to 118; sequence NRMGF. Positions 142 and 175 each coordinate FMN. Substrate is bound at residue Asn175. Ser178 functions as the Nucleophile in the catalytic mechanism. Position 180 (Asn180) interacts with substrate. Residues Lys220 and Thr248 each coordinate FMN. 249 to 250 provides a ligand contact to substrate; it reads NT. FMN is bound by residues Gly271, Gly300, and 321–322; that span reads YT.

It belongs to the dihydroorotate dehydrogenase family. Type 2 subfamily. In terms of assembly, monomer. FMN is required as a cofactor.

The protein resides in the cell membrane. It catalyses the reaction (S)-dihydroorotate + a quinone = orotate + a quinol. The protein operates within pyrimidine metabolism; UMP biosynthesis via de novo pathway; orotate from (S)-dihydroorotate (quinone route): step 1/1. Its function is as follows. Catalyzes the conversion of dihydroorotate to orotate with quinone as electron acceptor. The protein is Dihydroorotate dehydrogenase (quinone) of Burkholderia ambifaria (strain ATCC BAA-244 / DSM 16087 / CCUG 44356 / LMG 19182 / AMMD) (Burkholderia cepacia (strain AMMD)).